The sequence spans 205 residues: Ras-related protein Rab-1A (205 aa).

GTP-binding positions include glycine 18–cysteine 26, tyrosine 36–threonine 43, aspartate 66–glutamine 70, asparagine 124–aspartate 127, and serine 154–lysine 156. Residues tyrosine 40–phenylalanine 48 carry the Effector region motif. Residues serine 183–serine 198 show a composition bias toward polar residues. The segment at serine 183–cysteine 205 is disordered. S-geranylgeranyl cysteine attachment occurs at residues cysteine 204 and cysteine 205.

This sequence belongs to the small GTPase superfamily. Rab family.

Its subcellular location is the golgi apparatus. The protein resides in the endoplasmic reticulum. In terms of biological role, probably required for transit of protein from the ER through Golgi compartment. The sequence is that of Ras-related protein Rab-1A (RAB1A) from Lymnaea stagnalis (Great pond snail).